Here is a 120-residue protein sequence, read N- to C-terminus: NAD(P)H-quinone oxidoreductase subunit 3, chloroplastic (120 aa).

3 helical membrane passes run 9-29 (IFWA…LISG), 64-84 (MFAL…PWAM), and 88-108 (VLGV…ILGL).

Belongs to the complex I subunit 3 family. NDH is composed of at least 16 different subunits, 5 of which are encoded in the nucleus.

The protein localises to the plastid. The protein resides in the chloroplast thylakoid membrane. The enzyme catalyses a plastoquinone + NADH + (n+1) H(+)(in) = a plastoquinol + NAD(+) + n H(+)(out). It carries out the reaction a plastoquinone + NADPH + (n+1) H(+)(in) = a plastoquinol + NADP(+) + n H(+)(out). In terms of biological role, NDH shuttles electrons from NAD(P)H:plastoquinone, via FMN and iron-sulfur (Fe-S) centers, to quinones in the photosynthetic chain and possibly in a chloroplast respiratory chain. The immediate electron acceptor for the enzyme in this species is believed to be plastoquinone. Couples the redox reaction to proton translocation, and thus conserves the redox energy in a proton gradient. The chain is NAD(P)H-quinone oxidoreductase subunit 3, chloroplastic from Lobularia maritima (Sweet alyssum).